Consider the following 535-residue polypeptide: Aklavinone 12-hydroxylase RdmE (535 aa).

Positions 15, 16, 35, 119, and 143 each coordinate FAD. Residue Tyr224 is the Proton acceptor of the active site. Asp308 is a binding site for FAD. Gly317 is a binding site for aklavinone.

It belongs to the PheA/TfdB FAD monooxygenase family. As to quaternary structure, monomer. The cofactor is FAD.

The enzyme catalyses aklavinone + NADPH + O2 + H(+) = epsilon-rhodomycinone + NADP(+) + H2O. It participates in antibiotic biosynthesis; daunorubicin biosynthesis. The protein operates within antibiotic biosynthesis; carminomycin biosynthesis. It functions in the pathway antibiotic biosynthesis; rhodomycin biosynthesis. Its activity is regulated as follows. Inhibited by phenylglyoxal and 2,3-butanedione. NADP provides a partial protection against inhibition by phenylglyoxal. Increasing the methanol concentration in the assay causes inhibition of the enzyme. Involved in the biosynthesis of the anthracyclines carminomycin, rhodomycin and daunorubicin (daunomycin) which are aromatic polyketide antibiotics that exhibit high cytotoxicity and are widely applied in the chemotherapy of a variety of cancers. Catalyzes the incorporation of a hydroxyl group at position C-11 of aklavinone, resulting in epsilon-rhodomycinone. It cannot accept substrates glycosylated at position C-7 and is specific for the C-9R configuration of anthracyclines. It can use both NAD or NADP but it is slowly inactivated in the presence of NADH. The protein is Aklavinone 12-hydroxylase RdmE (rdmE) of Streptomyces purpurascens.